Reading from the N-terminus, the 212-residue chain is Inner membrane-spanning protein YciB (212 aa).

5 helical membrane passes run 49–69 (APVL…VLYL), 78–98 (TMLW…IWFH), 105–125 (WKPS…PIVA), 150–170 (LAWA…AYNF), and 178–198 (FKAF…GLYM).

The protein belongs to the YciB family.

It is found in the cell inner membrane. Its function is as follows. Plays a role in cell envelope biogenesis, maintenance of cell envelope integrity and membrane homeostasis. In Leptothrix cholodnii (strain ATCC 51168 / LMG 8142 / SP-6) (Leptothrix discophora (strain SP-6)), this protein is Inner membrane-spanning protein YciB.